The primary structure comprises 378 residues: Gibberellin 20 oxidase 2 (378 aa).

Positions 1–10 (MAILCTTTSP) are enriched in polar residues. The tract at residues 1-26 (MAILCTTTSPAEKEHEPKQDLEKDQT) is disordered. A compositionally biased stretch (basic and acidic residues) spans 11–25 (AEKEHEPKQDLEKDQ). Positions 220–320 (ENDSIMRLNH…RKSMAFFLCP (101 aa)) constitute a Fe2OG dioxygenase domain. The Fe cation site is built by H245, D247, and H301. Residue R311 is part of the active site.

The protein belongs to the iron/ascorbate-dependent oxidoreductase family. GA20OX subfamily. The cofactor is Fe(2+). It depends on L-ascorbate as a cofactor. In terms of tissue distribution, expressed in inflorescence and developing siliques. Detected in seeds, roots, cotyledons and leaves. In seeds, specifically detected at the rim of the embryo and the outer integument.

The enzyme catalyses gibberellin A12 + 2 2-oxoglutarate + 3 O2 + H(+) = gibberellin A9 + 2 succinate + 3 CO2 + 2 H2O. The catalysed reaction is gibberellin A12 + 2-oxoglutarate + O2 = gibberellin A15 + succinate + CO2. It carries out the reaction gibberellin A15 + 2-oxoglutarate + O2 = gibberellin A24 + succinate + CO2 + H2O. It catalyses the reaction gibberellin A53 + 2-oxoglutarate + O2 = gibberellin A44 + succinate + CO2. The enzyme catalyses gibberellin A12 + 3 2-oxoglutarate + 3 O2 = gibberellin A25 + 3 succinate + 3 CO2 + H2O + H(+). It participates in plant hormone biosynthesis; gibberellin biosynthesis. In terms of biological role, key oxidase enzyme in the biosynthesis of gibberellin that catalyzes the conversion of GA12 to GA9, via a three-step oxidation at C-20 of the GA skeleton, and GA25 is also formed as a minor product. GA53 is less effectively oxidized than GA12 and is only oxidized one step to GA44. Involved in the promotion of the floral transition, fertility and silique elongation, but plays only a minor role in elongation of seedling organs. Acts redundantly with GA20OX1. This chain is Gibberellin 20 oxidase 2 (GA20OX2), found in Arabidopsis thaliana (Mouse-ear cress).